The chain runs to 1986 residues: Protein Shroom3 (1986 aa).

Residues Met-1–Thr-21 are disordered. In terms of domain architecture, PDZ spans Phe-24–Val-109. 5 disordered regions span residues Cys-152–Ser-199, Arg-211–Pro-239, Thr-265–Ser-285, Gln-342–Leu-463, and Asn-564–Phe-1055. A Phosphoserine modification is found at Ser-212. Polar residues-rich tracts occupy residues Pro-357–Leu-376 and Pro-415–Thr-425. Residues Asp-430–Pro-440 show a composition bias toward basic and acidic residues. Phosphoserine is present on residues Ser-439 and Ser-443. The span at Ala-595–Ala-607 shows a compositional bias: polar residues. Over residues Gln-630–Gly-645 the composition is skewed to basic and acidic residues. Residues Asn-653–Val-677 are compositionally biased toward polar residues. The span at Ser-747–Ala-761 shows a compositional bias: low complexity. The span at Lys-774–Arg-785 shows a compositional bias: basic and acidic residues. Composition is skewed to low complexity over residues Tyr-796–Ser-814 and Asp-865–Gly-874. Residue Ser-888 is modified to Phosphoserine. Residues Glu-895 to Gly-908 show a composition bias toward basic and acidic residues. Residue Thr-909 is modified to Phosphothreonine. Residues Ser-912 and Ser-969 each carry the phosphoserine modification. The 97-residue stretch at Ile-927–Gly-1023 folds into the ASD1 domain. Residues Leu-1004–Asn-1020 show a composition bias toward basic and acidic residues. Residues Ser-1063 and Ser-1066 each carry the phosphoserine modification. 4 disordered regions span residues Tyr-1083–Gly-1102, Ala-1107–Leu-1223, Ala-1304–Val-1425, and Ala-1446–Glu-1654. The span at Ala-1114–Ala-1127 shows a compositional bias: low complexity. The span at Arg-1134–His-1146 shows a compositional bias: basic and acidic residues. Residues Trp-1175, Val-1179, and Ser-1219 each carry the phosphoserine modification. The segment covering Ala-1307 to Ala-1318 has biased composition (low complexity). Phosphoserine is present on residues Ser-1350 and Ser-1354. Polar residues predominate over residues Tyr-1366 to Leu-1399. The segment covering Pro-1455 to Pro-1469 has biased composition (low complexity). A compositionally biased stretch (pro residues) spans Leu-1513–Glu-1524. Residues Glu-1581–Leu-1630 show a composition bias toward polar residues. Over residues Pro-1634–Glu-1654 the composition is skewed to basic and acidic residues. The region spanning Glu-1659–Pro-1947 is the ASD2 domain. A coiled-coil region spans residues Arg-1844–Arg-1890.

It belongs to the shroom family. In terms of assembly, interacts with F-actin. Interacts with ROCK1.

Its subcellular location is the cell junction. The protein resides in the adherens junction. The protein localises to the cytoplasm. It is found in the cytoskeleton. It localises to the apical cell membrane. Controls cell shape changes in the neuroepithelium during neural tube closure. Induces apical constriction in epithelial cells by promoting the apical accumulation of F-actin and myosin II, and probably by bundling stress fibers. Induces apicobasal cell elongation by redistributing gamma-tubulin and directing the assembly of robust apicobasal microtubule arrays. The polypeptide is Protein Shroom3 (Shroom3) (Mus musculus (Mouse)).